A 179-amino-acid polypeptide reads, in one-letter code: Viral interleukin-10 homolog (179 aa).

Positions 1–18 (MFRASLLCCLVLLAGVWA) are cleaved as a signal peptide. Cystine bridges form between Cys-30-Cys-127 and Cys-80-Cys-133. 2 N-linked (GlcNAc...) asparagine; by host glycosylation sites follow: Asn-100 and Asn-135.

The protein belongs to the IL-10 family.

The protein localises to the secreted. Functionally, down-regulates the expression of the TAP1 gene (transporter associated with antigen processing), thereby affecting the transport of peptides into the endoplasmic reticulum and subsequent peptide loading by MHC class I molecules. In consequence, infected cells are masked for immune recognition by cytotoxic T-lymphocytes. The chain is Viral interleukin-10 homolog from Equus caballus (Horse).